The chain runs to 161 residues: Nucleotide-binding protein ABO_0048 (161 aa).

Belongs to the YajQ family.

Its function is as follows. Nucleotide-binding protein. The protein is Nucleotide-binding protein ABO_0048 of Alcanivorax borkumensis (strain ATCC 700651 / DSM 11573 / NCIMB 13689 / SK2).